Reading from the N-terminus, the 560-residue chain is General negative regulator of transcription subunit 5 (560 aa).

3 coiled-coil regions span residues 3–26 (QRKLQQDIDKLLKKVKEGIEDFDD), 37–71 (SNSSHREKLESDLKREIKKLQKHRDQIKTWLSKED), and 124–177 (KRDQ…NEMD). Residues 212–330 (CEIQPSSSNN…DSEQQLNFPP (119 aa)) are disordered. Polar residues predominate over residues 215 to 237 (QPSSSNNEAPKEGNNQTSLSSIR). Over residues 273 to 288 (SQSISSTPTPVSTDTP) the composition is skewed to low complexity. Residues 299–311 (FDNSTLGTPTTHV) are compositionally biased toward polar residues. Position 306 is a phosphothreonine (Thr306). Residue Lys338 forms a Glycyl lysine isopeptide (Lys-Gly) (interchain with G-Cter in ubiquitin) linkage. A Phosphoserine modification is found at Ser377.

The protein belongs to the CNOT2/3/5 family. As to quaternary structure, forms a NOT protein complex that comprises NOT1, NOT2, NOT3, NOT4 and NOT5. Subunit of the 1.0 MDa CCR4-NOT core complex that contains CCR4, CAF1, NOT1, NOT2, NOT3, NOT4, NOT5, CAF40 and CAF130. In the complex interacts with NOT1 and NOT2. The core complex probably is part of a less characterized 1.9 MDa CCR4-NOT complex.

It is found in the cytoplasm. It localises to the nucleus. In terms of biological role, acts as a component of the CCR4-NOT core complex, which in the nucleus seems to be a general transcription factor, and in the cytoplasm the major mRNA deadenylase involved in mRNA turnover. The NOT protein subcomplex negatively regulates the basal and activated transcription of many genes. Preferentially affects TC-type TATA element-dependent transcription. Could directly or indirectly inhibit component(s) of the general transcription machinery. This is General negative regulator of transcription subunit 5 (NOT5) from Saccharomyces cerevisiae (strain ATCC 204508 / S288c) (Baker's yeast).